The sequence spans 117 residues: Ribonuclease P protein component (117 aa).

This sequence belongs to the RnpA family. In terms of assembly, consists of a catalytic RNA component (M1 or rnpB) and a protein subunit.

It catalyses the reaction Endonucleolytic cleavage of RNA, removing 5'-extranucleotides from tRNA precursor.. RNaseP catalyzes the removal of the 5'-leader sequence from pre-tRNA to produce the mature 5'-terminus. It can also cleave other RNA substrates such as 4.5S RNA. The protein component plays an auxiliary but essential role in vivo by binding to the 5'-leader sequence and broadening the substrate specificity of the ribozyme. The sequence is that of Ribonuclease P protein component from Aliivibrio fischeri (strain ATCC 700601 / ES114) (Vibrio fischeri).